Reading from the N-terminus, the 188-residue chain is Type II secretion system protein H (188 aa).

Positions 1-10 (MKRSTRKQQG) are cleaved as a propeptide — leader sequence. Phe-11 is subject to N-methylphenylalanine. The chain crosses the membrane as a helical span at residues 13-35 (LLEMMLVVLLAGIAAGMVVMAFP).

It belongs to the GSP H family. In terms of assembly, type II secretion is composed of four main components: the outer membrane complex, the inner membrane complex, the cytoplasmic secretion ATPase and the periplasm-spanning pseudopilus. Interacts with core component OutG. In terms of processing, cleaved by prepilin peptidase. Methylated by prepilin peptidase at the amino group of the N-terminal phenylalanine once the leader sequence is cleaved by prepilin peptidase.

The protein resides in the cell inner membrane. Functionally, component of the type II secretion system required for the energy-dependent secretion of extracellular factors such as proteases and toxins from the periplasm. Part of the pseudopilus tip complex that is critical for the recognition and binding of secretion substrates. The sequence is that of Type II secretion system protein H (outH) from Pectobacterium carotovorum subsp. carotovorum (Erwinia carotovora subsp. carotovora).